Consider the following 375-residue polypeptide: tRNA-specific 2-thiouridylase MnmA (375 aa).

Residues 16 to 23 (GMSGGVDS) and M42 contribute to the ATP site. The interval 102–104 (NPD) is interaction with target base in tRNA. The active-site Nucleophile is C107. C107 and C203 form a disulfide bridge. G131 is an ATP binding site. An interaction with tRNA region spans residues 153 to 155 (KDQ). C203 (cysteine persulfide intermediate) is an active-site residue. The interval 315-316 (RY) is interaction with tRNA.

Belongs to the MnmA/TRMU family.

It localises to the cytoplasm. The catalysed reaction is S-sulfanyl-L-cysteinyl-[protein] + uridine(34) in tRNA + AH2 + ATP = 2-thiouridine(34) in tRNA + L-cysteinyl-[protein] + A + AMP + diphosphate + H(+). Its function is as follows. Catalyzes the 2-thiolation of uridine at the wobble position (U34) of tRNA, leading to the formation of s(2)U34. In Pseudomonas aeruginosa (strain UCBPP-PA14), this protein is tRNA-specific 2-thiouridylase MnmA.